Here is a 242-residue protein sequence, read N- to C-terminus: UPF0173 metal-dependent hydrolase APE_1117 (242 aa).

The protein belongs to the UPF0173 family.

The chain is UPF0173 metal-dependent hydrolase APE_1117 from Aeropyrum pernix (strain ATCC 700893 / DSM 11879 / JCM 9820 / NBRC 100138 / K1).